Here is a 395-residue protein sequence, read N- to C-terminus: Nuclear hormone receptor family member nhr-10 (395 aa).

Positions Glu-15–Gln-90 form a DNA-binding region, nuclear receptor. 2 consecutive NR C4-type zinc fingers follow at residues Cys-18–Cys-38 and Cys-54–Cys-78. Residues Pro-152–Ile-392 form the NR LBD domain.

The protein belongs to the nuclear hormone receptor family.

It localises to the nucleus. Its function is as follows. Probable transcription factor that acts in a feed-forward loop with nhr-68 to activate genes involved in the vitamin B12-independent breakdown of the short-chain fatty acid propionate. This pathway is triggered in response to a diet low in vitamin B12, when canonical vitamin B12-dependent propionate breakdown cannot function; the resulting accumulation of propionate is probably sensed by nhr-10 and/or nhr-68. This chain is Nuclear hormone receptor family member nhr-10 (nhr-10), found in Caenorhabditis elegans.